Reading from the N-terminus, the 856-residue chain is Alanine/arginine aminopeptidase (856 aa).

Substrate is bound by residues E132 and 264–268 (GAMEN). H300 contributes to the Zn(2+) binding site. The active-site Proton acceptor is the E301. Residues H304 and E323 each contribute to the Zn(2+) site.

This sequence belongs to the peptidase M1 family. The cofactor is Zn(2+).

Functionally, positive effector of glycogen accumulation. May be involved in nutrient-sensing. The sequence is that of Alanine/arginine aminopeptidase (AAP1) from Saccharomyces cerevisiae (strain ATCC 204508 / S288c) (Baker's yeast).